A 769-amino-acid polypeptide reads, in one-letter code: Portal protein (769 aa).

The putative leucine zipper motif stretch occupies residues 458 to 479; it reads LEGYVNNLFKTIEGLKDVNSDL. Disordered stretches follow at residues 654–675 and 750–769; these read RGPRRTPSPSWGLPDPTEDDER and RQLTNTSRRGVGCERRDRRS. The segment covering 760–769 has biased composition (basic and acidic residues); sequence VGCERRDRRS.

This sequence belongs to the herpesviridae portal protein family. As to quaternary structure, homododecamerizes. Interacts with terminase subunits TRM1 and TRM3.

Its subcellular location is the virion. The protein localises to the host nucleus. Functionally, forms a portal in the viral capsid through which viral DNA is translocated during DNA packaging. Assembles as a dodecamer at a single fivefold axe of the T=16 icosahedric capsid. Binds to the molecular motor that translocates the viral DNA, termed terminase. The protein is Portal protein (54) of Homo sapiens (Human).